Here is a 103-residue protein sequence, read N- to C-terminus: MIPGEIHYGRGDIEINTTAQRIEMNVVNTGDRPVQVGSHVHFPQANAALSFDRAAAHGYRLDIPAATAVRFEPGVAHTVSLVPLEGRRAVYGLTLNPPGRLDD.

The protein belongs to the urease beta subunit family. Heterotrimer of UreA (gamma), UreB (beta) and UreC (alpha) subunits. Three heterotrimers associate to form the active enzyme.

It is found in the cytoplasm. It carries out the reaction urea + 2 H2O + H(+) = hydrogencarbonate + 2 NH4(+). It functions in the pathway nitrogen metabolism; urea degradation; CO(2) and NH(3) from urea (urease route): step 1/1. The chain is Urease subunit beta from Mycobacterium marinum (strain ATCC BAA-535 / M).